The chain runs to 339 residues: MDKKIILAIESSCDETAAAVVVNGREVLSNIISSQIDIHTKFGGVVPEVASRKHIEAINAVVEEALEVAGVTFDDIDAIAVTYGPGLVGALLVGLQYAKGLAYSLDKPLIGVNHIEGHISANFIDHKDLEPPFVCLVVSGGHTFVVHVEDYGKFEIIGETRDDAAGEAFDKVARAVGLGYPGGPKIDKLAKEGNSDAIKFPKANFHDDTLDFSFSGVKSAVLNYLNKMEMKNEEINKADVVASFQKAVVEVLTDNAIKTCKMRKADKIAIAGGVASNSALRENLLREGEKRGIKVLFPSPILCTDNAAMIGSAAYFELLKGNVSEMSLNAKPNLRLGER.

Residues H114 and H118 each contribute to the Fe cation site. Substrate contacts are provided by residues 137–141, D170, G183, D187, and N277; that span reads VVSGG. D305 serves as a coordination point for Fe cation.

The protein belongs to the KAE1 / TsaD family. It depends on Fe(2+) as a cofactor.

It localises to the cytoplasm. The catalysed reaction is L-threonylcarbamoyladenylate + adenosine(37) in tRNA = N(6)-L-threonylcarbamoyladenosine(37) in tRNA + AMP + H(+). Its function is as follows. Required for the formation of a threonylcarbamoyl group on adenosine at position 37 (t(6)A37) in tRNAs that read codons beginning with adenine. Is involved in the transfer of the threonylcarbamoyl moiety of threonylcarbamoyl-AMP (TC-AMP) to the N6 group of A37, together with TsaE and TsaB. TsaD likely plays a direct catalytic role in this reaction. The chain is tRNA N6-adenosine threonylcarbamoyltransferase from Clostridium perfringens (strain ATCC 13124 / DSM 756 / JCM 1290 / NCIMB 6125 / NCTC 8237 / Type A).